Consider the following 472-residue polypeptide: Methanethiol oxidase (472 aa).

Ala2 carries the post-translational modification N-acetylalanine. Phosphoserine occurs at positions 111, 371, and 467.

The protein belongs to the selenium-binding protein family. In terms of assembly, interacts with USP33. Post-translationally, phosphorylated. In terms of processing, the N-terminus is blocked. As to expression, widely expressed. Highly expressed in liver, lung, colon, prostate, kidney and pancreas. In brain, present both in neurons and glia (at protein level). Down-regulated in lung adenocarcinoma, colorectal carcinoma and ovarian cancer. Two-fold up-regulated in brain and blood from schizophrenia patients.

The protein localises to the nucleus. Its subcellular location is the cytoplasm. The protein resides in the cytosol. It is found in the membrane. The catalysed reaction is methanethiol + O2 + H2O = hydrogen sulfide + formaldehyde + H2O2 + H(+). The protein operates within organosulfur degradation. Catalyzes the oxidation of methanethiol, an organosulfur compound known to be produced in substantial amounts by gut bacteria. Selenium-binding protein which may be involved in the sensing of reactive xenobiotics in the cytoplasm. May be involved in intra-Golgi protein transport. The polypeptide is Methanethiol oxidase (SELENBP1) (Homo sapiens (Human)).